A 278-amino-acid polypeptide reads, in one-letter code: Digeranylgeranylglyceryl phosphate synthase (278 aa).

The next 7 membrane-spanning stretches (helical) occupy residues 12–32, 34–54, 91–111, 142–162, 204–224, 226–246, and 257–277; these read LKNCLTASFGAFIGGLIASYF, ISMIDNLILASIVVFLVCGFG, LLVVMGLIISMFNITCFLMAV, VFIFGGIAVGNIDVTIMLFLC, FLLVFAVLLSPLPYLFGFFGI, YLISVIFCDLLFLIGIYNLVM, and SRNIKIVTNLVLIAFLIGSLF.

The protein belongs to the UbiA prenyltransferase family. DGGGP synthase subfamily. Mg(2+) is required as a cofactor.

It is found in the cell membrane. It carries out the reaction sn-3-O-(geranylgeranyl)glycerol 1-phosphate + (2E,6E,10E)-geranylgeranyl diphosphate = 2,3-bis-O-(geranylgeranyl)-sn-glycerol 1-phosphate + diphosphate. It participates in membrane lipid metabolism; glycerophospholipid metabolism. In terms of biological role, prenyltransferase that catalyzes the transfer of the geranylgeranyl moiety of geranylgeranyl diphosphate (GGPP) to the C2 hydroxyl of (S)-3-O-geranylgeranylglyceryl phosphate (GGGP). This reaction is the second ether-bond-formation step in the biosynthesis of archaeal membrane lipids. This Methanococcus maripaludis (strain C6 / ATCC BAA-1332) protein is Digeranylgeranylglyceryl phosphate synthase.